Here is a 343-residue protein sequence, read N- to C-terminus: Signal peptide peptidase 2 (343 aa).

Residues 1 to 19 are Lumenal-facing; sequence MKTHERAANLALAGLSLAP. The chain crosses the membrane as a helical span at residues 20–40; the sequence is LVVKVNPNANVILTACLAVYV. Over 41–62 the chain is Cytoplasmic; sequence GCYRSVKPTPPAETMSKEHAMR. Residues 63–83 traverse the membrane as a helical segment; sequence FPLVGSAMLLSLFLLFKFLSK. Over 84-89 the chain is Lumenal; sequence DLVNTV. A helical transmembrane segment spans residues 90–110; the sequence is LTAYFFILGIAALCATLLPSI. Topologically, residues 111–141 are cytoplasmic; sequence KRFLPKEWNDNAIVWRAPLFHSLSVEFTRSQ. The chain crosses the membrane as a helical span at residues 142–162; that stretch reads VVASIPGFFFCIWYAAKKHWL. The Lumenal segment spans residues 163–165; sequence ANN. A helical transmembrane segment spans residues 166 to 186; it reads VLGISFCIQGIEMLSLGSFKT. Residues 187-188 lie on the Cytoplasmic side of the membrane; that stretch reads GA. Residues 189–209 traverse the membrane as a helical segment; it reads ILLSGLFFYDIFWVFFTPVMV. Asp-198 is an active-site residue. Over 210–230 the chain is Lumenal; the sequence is SVAKSFDAPIKLLFPTGDAAR. A helical transmembrane segment spans residues 231–251; sequence PFSMLGLGDIVIPGIFVALAL. Asp-239 is a catalytic residue. At 252–266 the chain is on the cytoplasmic side; that stretch reads RFDVSRGIKNRYFNS. Residues 267 to 287 form a helical membrane-spanning segment; it reads AFLGYTVGLTVTIIVMNWFQA. Residues 288–290 are Lumenal-facing; it reads AQP. The PAL signature appears at 290 to 292; the sequence is PAL. A helical membrane pass occupies residues 291-311; the sequence is ALLYIVPGVIGFVAVHCLWNG. Residues 312–343 are Cytoplasmic-facing; the sequence is EVKPLLEYNESKAEEEEACEEDTDSKQNKKKE. Acidic residues predominate over residues 324-334; the sequence is AEEEEACEEDT. Positions 324–343 are disordered; it reads AEEEEACEEDTDSKQNKKKE. The Endoplasmic reticulum targeting signal motif lies at 340–343; sequence KKKE.

This sequence belongs to the peptidase A22B family. In terms of tissue distribution, ubiquitous.

Its subcellular location is the endoplasmic reticulum membrane. Functionally, intramembrane-cleaving aspartic protease (I-CLiP) that cleaves type II membrane signal peptides in the hydrophobic plane of the membrane. Catalyzes intramembrane proteolysis of some signal peptides after they have been cleaved from a preprotein, resulting in the release of the fragment from the ER membrane into the cytoplasm. This Oryza sativa subsp. japonica (Rice) protein is Signal peptide peptidase 2 (SPP2).